The chain runs to 352 residues: C-C chemokine receptor type 5 (352 aa).

The Extracellular portion of the chain corresponds to methionine 1–alanine 30. Residue tyrosine 3 is modified to Sulfotyrosine. O-linked (GalNAc...) serine glycans are attached at residues serine 6 and serine 7. Residues tyrosine 10, tyrosine 14, and tyrosine 15 each carry the sulfotyrosine modification. Cystine bridges form between cysteine 20/cysteine 269 and cysteine 101/cysteine 178. A helical transmembrane segment spans residues arginine 31–cysteine 58. Residues lysine 59–tyrosine 68 lie on the Cytoplasmic side of the membrane. The helical transmembrane segment at leucine 69–tyrosine 89 threads the bilayer. The Extracellular portion of the chain corresponds to alanine 90 to glutamine 102. The helical transmembrane segment at leucine 103–isoleucine 124 threads the bilayer. Residues aspartate 125–threonine 141 are Cytoplasmic-facing. A helical transmembrane segment spans residues valine 142–phenylalanine 166. Over threonine 167–isoleucine 198 the chain is Extracellular. The chain crosses the membrane as a helical span at residues valine 199–leucine 218. The Cytoplasmic segment spans residues lysine 219–arginine 235. The helical transmembrane segment at leucine 236–phenylalanine 260 threads the bilayer. Residues glutamine 261–glutamine 277 lie on the Extracellular side of the membrane. A helical transmembrane segment spans residues alanine 278–glycine 301. Over glutamate 302–leucine 352 the chain is Cytoplasmic. Residues cysteine 321, cysteine 323, and cysteine 324 are each lipidated (S-palmitoyl cysteine). Serine 336, serine 337, serine 342, and serine 349 each carry phosphoserine; by BARK1.

Belongs to the G-protein coupled receptor 1 family. In terms of assembly, interacts with PRAF2. Efficient ligand binding to CCL3/MIP-1alpha and CCL4/MIP-1beta requires sulfation, O-glycosylation and sialic acid modifications. Glycosylation on Ser-6 is required for efficient binding of CCL4. Interacts with GRK2. Interacts with ARRB1 and ARRB2. Interacts with CNIH4. Interacts with S100A4; this interaction stimulates T-lymphocyte chemotaxis. Sulfated on at least 2 of the N-terminal tyrosines. Sulfation is required for efficient binding of the chemokines, CCL3 and CCL4. In terms of processing, palmitoylation in the C-terminal is important for cell surface expression. Post-translationally, phosphorylation on serine residues in the C-terminal is stimulated by binding CC chemokines especially by APO-RANTES. O-glycosylated, but not N-glycosylated. Ser-6 appears to be the major site even if Ser-7 may be also O-glycosylated. Also sialylated glycans present which contribute to chemokine binding. Thr-16 and Ser-17 may also be glycosylated and, if so, with small moieties such as a T-antigen.

It localises to the cell membrane. In terms of biological role, receptor for a number of inflammatory CC-chemokines including CCL3/MIP-1-alpha, CCL4/MIP-1-beta and RANTES and subsequently transduces a signal by increasing the intracellular calcium ion level. May play a role in the control of granulocytic lineage proliferation or differentiation. Participates in T-lymphocyte migration to the infection site by acting as a chemotactic receptor. The sequence is that of C-C chemokine receptor type 5 (CCR5) from Colobus polykomos (Western black-and-white colobus monkey).